A 217-amino-acid polypeptide reads, in one-letter code: Ribonuclease T (217 aa).

One can recognise an Exonuclease domain in the interval Val20 to Phe195. Residues Asp23, Glu25, His182, and Asp187 each coordinate Mg(2+). Residue His182 is the Proton donor/acceptor of the active site.

Belongs to the RNase T family. As to quaternary structure, homodimer. Mg(2+) is required as a cofactor.

Functionally, trims short 3' overhangs of a variety of RNA species, leaving a one or two nucleotide 3' overhang. Responsible for the end-turnover of tRNA: specifically removes the terminal AMP residue from uncharged tRNA (tRNA-C-C-A). Also appears to be involved in tRNA biosynthesis. This Vibrio vulnificus (strain YJ016) protein is Ribonuclease T.